Consider the following 81-residue polypeptide: MQDGIHPNYQETSVTCGCGNTFTTRSTRPELKIDICSECHPFYTGKLKYVDTAGRIDKFQKKFAAGTYGSLQKKKAKKATK.

Zn(2+) contacts are provided by Cys-16, Cys-18, Cys-36, and Cys-39.

This sequence belongs to the bacterial ribosomal protein bL31 family. Type A subfamily. In terms of assembly, part of the 50S ribosomal subunit. Requires Zn(2+) as cofactor.

Functionally, binds the 23S rRNA. This chain is Large ribosomal subunit protein bL31, found in Rhodopirellula baltica (strain DSM 10527 / NCIMB 13988 / SH1).